The following is a 191-amino-acid chain: UPF0669 protein C6orf120 (191 aa).

The first 30 residues, 1–30 (MAAPRGRAAPWTTALLLLLASQVLSPGSCA), serve as a signal peptide directing secretion. An N-linked (GlcNAc...) asparagine glycan is attached at Asn-53.

The protein belongs to the UPF0669 family. In terms of tissue distribution, mainly expressed in hepatocytes and some weak expression in germinal center cells of lymph nodes.

The protein localises to the secreted. Functionally, may be involved in induction of apoptosis in CD4(+) T-cells, but not CD8(+) T-cells or hepatocytes. The chain is UPF0669 protein C6orf120 (C6orf120) from Homo sapiens (Human).